A 217-amino-acid polypeptide reads, in one-letter code: tRNA (guanine-N(7)-)-methyltransferase (217 aa).

S-adenosyl-L-methionine-binding residues include Glu44, Glu69, Asp96, and Asp118. The active site involves Asp118. Residues Lys122, Asp154, and 191–194 (TEYE) contribute to the substrate site.

It belongs to the class I-like SAM-binding methyltransferase superfamily. TrmB family.

The catalysed reaction is guanosine(46) in tRNA + S-adenosyl-L-methionine = N(7)-methylguanosine(46) in tRNA + S-adenosyl-L-homocysteine. The protein operates within tRNA modification; N(7)-methylguanine-tRNA biosynthesis. In terms of biological role, catalyzes the formation of N(7)-methylguanine at position 46 (m7G46) in tRNA. This chain is tRNA (guanine-N(7)-)-methyltransferase, found in Bacillus cytotoxicus (strain DSM 22905 / CIP 110041 / 391-98 / NVH 391-98).